The sequence spans 352 residues: Glucose-6-phosphatase catalytic subunit 1 (352 aa).

Over 1 to 27 the chain is Lumenal; that stretch reads MDLLHSWGVELAVYLQTRYGKYEGLFD. A helical transmembrane segment spans residues 28-48; that stretch reads LASTVADLHTTFFWLFPIWFH. Over 49–56 the chain is Cytoplasmic; sequence LRRDTALR. Residues 57–77 traverse the membrane as a helical segment; the sequence is LIWVAVIGDWLNLVLKWVLFG. At 78 to 113 the chain is on the lumenal side; it reads ERPYWWVHETKFYGAGPAPSLQQFPITCETGPGSPS. Arg-79 contacts substrate. The chain crosses the membrane as a helical span at residues 114 to 134; it reads GHAMGAAGVWYVMVTALLSIA. His-115 serves as the catalytic Proton donor. Residues 135–141 are Cytoplasmic-facing; the sequence is REKQCPP. Residues 142 to 162 form a helical membrane-spanning segment; the sequence is LLYRFLYIGLWMLMGLVELVV. Over 163 to 166 the chain is Lumenal; sequence CISR. Substrate is bound at residue Arg-166. A helical transmembrane segment spans residues 167–187; that stretch reads VYMAAHFPHQVIAGIITGTLV. The active-site Nucleophile is the His-172. At 188-205 the chain is on the cytoplasmic side; it reads AEVVSKEKWIYSASLKKY. A helical membrane pass occupies residues 206 to 226; the sequence is FLITLFLTSFAVGFYVLLKAL. At 227–256 the chain is on the lumenal side; that stretch reads DVDLLWTMEKAQKWCIRPEWVHLDSAPFAS. A helical transmembrane segment spans residues 257-276; sequence LLRNMGSLFGLGLGLHSPFY. At 277-289 the chain is on the cytoplasmic side; sequence KTTKMRIMSAPLR. The chain crosses the membrane as a helical span at residues 290–310; that stretch reads IGCIVISVSLLHLLDGWTFSP. Residues 311-324 are Lumenal-facing; that stretch reads ENHMTFYALSFGKS. The chain crosses the membrane as a helical span at residues 325 to 345; it reads AVALLIPTTLVPWALSKIYPV. Topologically, residues 346–352 are cytoplasmic; it reads KTEGKNL. A Prevents secretion from ER motif is present at residues 349–352; sequence GKNL.

This sequence belongs to the glucose-6-phosphatase family.

It is found in the endoplasmic reticulum membrane. It carries out the reaction D-glucose 6-phosphate + H2O = D-glucose + phosphate. It functions in the pathway carbohydrate biosynthesis; gluconeogenesis. In terms of biological role, hydrolyzes glucose-6-phosphate to glucose in the endoplasmic reticulum. Forms with the glucose-6-phosphate transporter (SLC37A4/G6PT) the complex responsible for glucose production in the terminal step of glycogenolysis and gluconeogenesis. Hence, it is the key enzyme in homeostatic regulation of blood glucose levels. This Haplochromis nubilus (Blue Victoria mouthbrooder) protein is Glucose-6-phosphatase catalytic subunit 1 (g6pc1).